We begin with the raw amino-acid sequence, 186 residues long: Large ribosomal subunit protein uL22 (186 aa).

Residues lysine 159 to glutamate 186 are disordered. The span at arginine 177 to glutamate 186 shows a compositional bias: basic and acidic residues.

It belongs to the universal ribosomal protein uL22 family.

The chain is Large ribosomal subunit protein uL22 (RpL17) from Aedes albopictus (Asian tiger mosquito).